Here is a 1578-residue protein sequence, read N- to C-terminus: Pentafunctional AROM polypeptide (1578 aa).

The interval 1–384 is 3-dehydroquinate synthase; it reads MTGPTKISIL…YEPRASVVPN (384 aa). Residues 44-46, 81-84, 114-116, and Asp119 contribute to the NAD(+) site; these read DTN, EVSK, and GGV. Arg130 is a 7-phospho-2-dehydro-3-deoxy-D-arabino-heptonate binding site. 139–140 is a binding site for NAD(+); that stretch reads TT. Positions 146 and 152 each coordinate 7-phospho-2-dehydro-3-deoxy-D-arabino-heptonate. Residue Lys161 participates in NAD(+) binding. 7-phospho-2-dehydro-3-deoxy-D-arabino-heptonate is bound at residue Asn162. Residues 179–182 and Asn190 each bind NAD(+); that span reads FLET. Glu194 provides a ligand contact to Zn(2+). Residues 194–197 and Lys250 each bind 7-phospho-2-dehydro-3-deoxy-D-arabino-heptonate; that span reads EVIK. Glu260 (proton acceptor; for 3-dehydroquinate synthase activity) is an active-site residue. 7-phospho-2-dehydro-3-deoxy-D-arabino-heptonate contacts are provided by residues 264 to 268 and His271; that span reads RNLLN. Residue His271 coordinates Zn(2+). His275 (proton acceptor; for 3-dehydroquinate synthase activity) is an active-site residue. The 7-phospho-2-dehydro-3-deoxy-D-arabino-heptonate site is built by His287 and Lys356. Zn(2+) is bound at residue His287. Positions 397–842 are EPSP synthase; the sequence is VYPGVSPASE…WDTLRQKFAV (446 aa). The active-site For EPSP synthase activity is the Cys824. The segment at 864–1055 is shikimate kinase; it reads SASVFIIGMR…KKKQHSFFVS (192 aa). 871–878 provides a ligand contact to ATP; the sequence is GMRGAGKT. Residues 1056-1276 form a 3-dehydroquinase region; it reads LTLPDVRGAD…AAPGQLSATD (221 aa). The active-site Proton acceptor; for 3-dehydroquinate dehydratase activity is His1179. Residue Lys1207 is the Schiff-base intermediate with substrate; for 3-dehydroquinate dehydratase activity of the active site. The segment at 1289 to 1578 is shikimate dehydrogenase; sequence KKRFALFGSP…YERARAIVLG (290 aa).

This sequence in the N-terminal section; belongs to the sugar phosphate cyclases superfamily. Dehydroquinate synthase family. The protein in the 2nd section; belongs to the EPSP synthase family. It in the 3rd section; belongs to the shikimate kinase family. In the 4th section; belongs to the type-I 3-dehydroquinase family. This sequence in the C-terminal section; belongs to the shikimate dehydrogenase family. In terms of assembly, homodimer. Zn(2+) is required as a cofactor.

The protein localises to the cytoplasm. The catalysed reaction is 7-phospho-2-dehydro-3-deoxy-D-arabino-heptonate = 3-dehydroquinate + phosphate. It catalyses the reaction 3-dehydroquinate = 3-dehydroshikimate + H2O. It carries out the reaction shikimate + NADP(+) = 3-dehydroshikimate + NADPH + H(+). The enzyme catalyses shikimate + ATP = 3-phosphoshikimate + ADP + H(+). The catalysed reaction is 3-phosphoshikimate + phosphoenolpyruvate = 5-O-(1-carboxyvinyl)-3-phosphoshikimate + phosphate. Its pathway is metabolic intermediate biosynthesis; chorismate biosynthesis; chorismate from D-erythrose 4-phosphate and phosphoenolpyruvate: step 2/7. It functions in the pathway metabolic intermediate biosynthesis; chorismate biosynthesis; chorismate from D-erythrose 4-phosphate and phosphoenolpyruvate: step 3/7. It participates in metabolic intermediate biosynthesis; chorismate biosynthesis; chorismate from D-erythrose 4-phosphate and phosphoenolpyruvate: step 4/7. The protein operates within metabolic intermediate biosynthesis; chorismate biosynthesis; chorismate from D-erythrose 4-phosphate and phosphoenolpyruvate: step 5/7. Its pathway is metabolic intermediate biosynthesis; chorismate biosynthesis; chorismate from D-erythrose 4-phosphate and phosphoenolpyruvate: step 6/7. In terms of biological role, the AROM polypeptide catalyzes 5 consecutive enzymatic reactions in prechorismate polyaromatic amino acid biosynthesis. This chain is Pentafunctional AROM polypeptide, found in Neosartorya fischeri (strain ATCC 1020 / DSM 3700 / CBS 544.65 / FGSC A1164 / JCM 1740 / NRRL 181 / WB 181) (Aspergillus fischerianus).